A 296-amino-acid chain; its full sequence is mRNA export factor rsm1 (296 aa).

The C3HC-type zinc-finger motif lies at 40 to 174 (PWSREEFLRR…VSTHLPEEMT (135 aa)).

Its subcellular location is the cytoplasm. It is found in the nucleus. Its function is as follows. Involved in the export of mRNA from the nucleus to the cytoplasm. This chain is mRNA export factor rsm1 (rsm1), found in Schizosaccharomyces pombe (strain 972 / ATCC 24843) (Fission yeast).